Reading from the N-terminus, the 216-residue chain is UPF0323 lipoprotein HPAG1_0235 (216 aa).

The signal sequence occupies residues 1–27; sequence MKKPYRKISDYAIVGGLSALVMVSIVG. Residue cysteine 28 is the site of N-palmitoyl cysteine attachment. Cysteine 28 is lipidated: S-diacylglycerol cysteine. Positions 159–196 are enriched in polar residues; the sequence is QRTYKSPQAYQRSQNSFSKSAPSASGMGTASKGQSGFF. The disordered stretch occupies residues 159–216; that stretch reads QRTYKSPQAYQRSQNSFSKSAPSASGMGTASKGQSGFFGSSRPTSSPAVSSGTRGFNA. The span at 198-209 shows a compositional bias: low complexity; it reads SSRPTSSPAVSS.

This sequence belongs to the UPF0323 family.

It localises to the cell membrane. The protein is UPF0323 lipoprotein HPAG1_0235 of Helicobacter pylori (strain HPAG1).